Reading from the N-terminus, the 337-residue chain is tRNA N6-adenosine threonylcarbamoyltransferase (337 aa).

The Fe cation site is built by H111 and H115. Substrate is bound by residues 134–138 (LVSGG), D167, G180, and N272. A Fe cation-binding site is contributed by D300.

Belongs to the KAE1 / TsaD family. The cofactor is Fe(2+).

Its subcellular location is the cytoplasm. It carries out the reaction L-threonylcarbamoyladenylate + adenosine(37) in tRNA = N(6)-L-threonylcarbamoyladenosine(37) in tRNA + AMP + H(+). Required for the formation of a threonylcarbamoyl group on adenosine at position 37 (t(6)A37) in tRNAs that read codons beginning with adenine. Is involved in the transfer of the threonylcarbamoyl moiety of threonylcarbamoyl-AMP (TC-AMP) to the N6 group of A37, together with TsaE and TsaB. TsaD likely plays a direct catalytic role in this reaction. This Escherichia coli (strain K12 / MC4100 / BW2952) protein is tRNA N6-adenosine threonylcarbamoyltransferase.